We begin with the raw amino-acid sequence, 292 residues long: Lyso-ornithine lipid O-acyltransferase (292 aa).

A helical membrane pass occupies residues Gly11–Leu31. The interval Arg258 to Pro292 is disordered.

It belongs to the 1-acyl-sn-glycerol-3-phosphate acyltransferase family. OlsA subfamily.

Its subcellular location is the membrane. It carries out the reaction a lyso-ornithine lipid + a fatty acyl-[ACP] = an N(2)-[(3R)-3-(acyloxy)acyl]-L-ornithine lipid + holo-[ACP]. It functions in the pathway lipid metabolism. Functionally, catalyzes the second step in the formation of ornithine lipids, which are phosphorus-free membrane lipids. Uses acyl-acyl carrier protein (acyl-AcpP) as an acyl donor and converts lyso-ornithine lipid (LOL) into ornithine lipid (OL). In Rhizobium meliloti (strain 1021) (Ensifer meliloti), this protein is Lyso-ornithine lipid O-acyltransferase.